The following is a 174-amino-acid chain: Peptide deformylase (174 aa).

Fe cation-binding residues include Cys96 and His138. The active site involves Glu139. His142 contributes to the Fe cation binding site.

Belongs to the polypeptide deformylase family. Requires Fe(2+) as cofactor.

The enzyme catalyses N-terminal N-formyl-L-methionyl-[peptide] + H2O = N-terminal L-methionyl-[peptide] + formate. In terms of biological role, removes the formyl group from the N-terminal Met of newly synthesized proteins. Requires at least a dipeptide for an efficient rate of reaction. N-terminal L-methionine is a prerequisite for activity but the enzyme has broad specificity at other positions. The sequence is that of Peptide deformylase from Helicobacter pylori (strain P12).